Here is a 63-residue protein sequence, read N- to C-terminus: Parvalbumin alpha (63 aa).

EF-hand domains follow at residues 28–38 (IEEEELGLILK) and 39–63 (VLLAAGDKDGDGKIGVDEFVTLVSE). Ca(2+) is bound by residues Glu29, Glu32, Asp45, Asp47, Asp49, Lys51, and Glu56.

In terms of tissue distribution, detected in muscle and cutaneous mucus. In the skin, detected in cells in the basal region of the glandular epithelium of the dermal mucus glands (at protein level).

The protein localises to the cytoplasm. It is found in the secreted. Functionally, in muscle, parvalbumin is thought to be involved in relaxation after contraction. It binds two calcium ions. This chain is Parvalbumin alpha, found in Rana temporaria (European common frog).